The primary structure comprises 420 residues: Histidine--tRNA ligase (420 aa).

Belongs to the class-II aminoacyl-tRNA synthetase family. In terms of assembly, homodimer.

It localises to the cytoplasm. It catalyses the reaction tRNA(His) + L-histidine + ATP = L-histidyl-tRNA(His) + AMP + diphosphate + H(+). This chain is Histidine--tRNA ligase, found in Desulforudis audaxviator (strain MP104C).